The sequence spans 139 residues: Histone H2AX (139 aa).

Disordered regions lie at residues 1-21 (MSGR…RSSR) and 119-139 (KKSS…SQEY). Residue Ser2 is modified to N-acetylserine. Ser2 is subject to Phosphoserine. Residues 7 to 19 (AVSKTRAKAKTRS) show a composition bias toward basic residues. Residue Lys10 is modified to N6-lactoyllysine; alternate. Glycyl lysine isopeptide (Lys-Gly) (interchain with G-Cter in ubiquitin) cross-links involve residues Lys14, Lys16, and Lys120. The residue at position 136 (Ser136) is a Phosphoserine. A [ST]-Q motif motif is present at residues 136–137 (SQ). Tyr139 is modified (phosphotyrosine; by WSTF).

It belongs to the histone H2A family. The nucleosome is a histone octamer containing two molecules each of H2A, H2B, H3 and H4 assembled in one H3-H4 heterotetramer and two H2A-H2B heterodimers. The octamer wraps approximately 147 bp of DNA. Interacts with numerous proteins required for DNA damage signaling and repair when phosphorylated on Ser-136. In terms of processing, phosphorylated. Phosphorylation of Ser-136 (H2AX139ph) occurs in response to DNA double strand breaks (DSBs) generated by exogenous genotoxic agents, by stalled replication forks and by meiotic recombination events. Phosphorylation is dependent on the DNA damage checkpoint kinases ATR and ATM, spreads on either side of a detected DSB site and may mark the surrounding chromatin for recruitment of proteins required for DNA damage signaling and repair. Widespread phosphorylation may also serve to amplify the damage signal or aid repair of persistent lesions. Dephosphorylation of Ser-136 is required for DNA DSB repair. Phosphorylation at Tyr-139 (H2AXY142ph) by baz1b/wstf determines the relative recruitment of either DNA repair or pro-apoptotic factors. Phosphorylation at Tyr-139 (H2AXY142ph) favors the recruitment of pro-apoptosis factors. In contrast, dephosphorylation of Tyr-139 by EYA proteins (eya1, eya2, eya3 or eya4) favors the recruitment of MDC1-containing DNA repair complexes to the tail of phosphorylated Ser-136 (H2AX139ph). Phosphorylated by VRK1. Post-translationally, monoubiquitination of Lys-120 (H2AXK119ub) by ring1 and rnf2/ring2 complex gives a specific tag for epigenetic transcriptional repression. Following DNA double-strand breaks (DSBs), it is ubiquitinated through 'Lys-63' linkage of ubiquitin moieties by the E2 ligase ube2n and the E3 ligases rnf8 and rnf168, leading to the recruitment of repair proteins to sites of DNA damage. Ubiquitination at Lys-14 and Lys-16 (H2AK13Ub and H2AK15Ub, respectively) in response to DNA damage is initiated by rnf168 that mediates monoubiquitination at these 2 sites, and 'Lys-63'-linked ubiquitin are then conjugated to monoubiquitin; rnf8 is able to extend 'Lys-63'-linked ubiquitin chains in vitro. H2AK119Ub and ionizing radiation-induced 'Lys-63'-linked ubiquitination (H2AK13Ub and H2AK15Ub) are distinct events.

The protein localises to the nucleus. Its subcellular location is the chromosome. Variant histone H2A which replaces conventional H2A in a subset of nucleosomes. Nucleosomes wrap and compact DNA into chromatin, limiting DNA accessibility to the cellular machineries which require DNA as a template. Histones thereby play a central role in transcription regulation, DNA repair, DNA replication and chromosomal stability. DNA accessibility is regulated via a complex set of post-translational modifications of histones, also called histone code, and nucleosome remodeling. Required for checkpoint-mediated arrest of cell cycle progression in response to low doses of ionizing radiation and for efficient repair of DNA double strand breaks (DSBs) specifically when modified by C-terminal phosphorylation. This chain is Histone H2AX (h2ax), found in Xenopus laevis (African clawed frog).